A 130-amino-acid chain; its full sequence is DUF35 domain-containing scaffold protein (130 aa).

Zn(2+) is bound by residues Cys20, Cys23, Cys34, and Cys37.

It belongs to the scaffold protein DUF35 family. As to quaternary structure, interacts with acetoacetyl-CoA thiolase and HMG-CoA synthase (HMGCS) that catalyzes the first and second step in the mevalonate pathway, respectively.

Its function is as follows. Functions as a scaffold to connect the acetoacetyl-CoA thiolase and HMG-CoA synthase (HMGCS) dimers in the channeling thiolase/HMGCS complex, which allows for efficient coupling of the endergonic thiolase reaction with the exergonic HMGCS reaction. This chain is DUF35 domain-containing scaffold protein, found in Methanothermococcus thermolithotrophicus (Methanococcus thermolithotrophicus).